Consider the following 476-residue polypeptide: Cysteine--tRNA ligase (476 aa).

C27 provides a ligand contact to Zn(2+). The 'HIGH' region signature appears at 29 to 39 (ITPYDSVHVGH). Zn(2+) is bound by residues C213, H238, and E242. The 'KMSKS' region motif lies at 271–275 (KMSKS). K274 contacts ATP.

The protein belongs to the class-I aminoacyl-tRNA synthetase family. The cofactor is Zn(2+).

It is found in the cytoplasm. The enzyme catalyses tRNA(Cys) + L-cysteine + ATP = L-cysteinyl-tRNA(Cys) + AMP + diphosphate. The sequence is that of Cysteine--tRNA ligase from Pyrobaculum arsenaticum (strain DSM 13514 / JCM 11321 / PZ6).